Consider the following 243-residue polypeptide: Protein GIGAS CELL1 (243 aa).

Interacts with APC/C activators such as FZR1, FZR2, FZR3, CDC20.1 and CDC20.5. Phosphorylated by CDKA-1 in complex with CYCA1-2. Expressed in rapidly dividing tissues such as shoot apical meristem and young leaves. Associated with cell division but also with specific cell types.

Negative regulator of the anaphase-promoting complex/cyclosome (APC/C) ubiquitin ligase required for proper mitotic and meiotic progression and cell fate determination. Involved in entry into both meiosis I and meiosis II. Prevents endomitosis by preferentially inhibiting APC/C(CDC20). Required for megagametophyte and endosperm development. Triggers mitotic cyclins (e.g. CYCB1-1 and CYCB1-2) accumulation. Confers immunity to bacterial pathogens (e.g. Pseudomonas syringae pv. tomato DC3000), which is associated with increased expression of disease resistance (R) genes. GIG1 and PANS1 are part of a network linking centromere cohesion and cell cycle progression through control of APC/C activity. The polypeptide is Protein GIGAS CELL1 (GIG1) (Arabidopsis thaliana (Mouse-ear cress)).